A 227-amino-acid polypeptide reads, in one-letter code: Urease accessory protein UreF (227 aa).

Belongs to the UreF family. In terms of assembly, ureD, UreF and UreG form a complex that acts as a GTP-hydrolysis-dependent molecular chaperone, activating the urease apoprotein by helping to assemble the nickel containing metallocenter of UreC. The UreE protein probably delivers the nickel.

It is found in the cytoplasm. In terms of biological role, required for maturation of urease via the functional incorporation of the urease nickel metallocenter. The sequence is that of Urease accessory protein UreF from Actinobacillus pleuropneumoniae (Haemophilus pleuropneumoniae).